The following is a 197-amino-acid chain: Large ribosomal subunit protein bL17 (197 aa).

A disordered region spans residues 120 to 197 (DVPPADTGQG…EEEESEEDNT (78 aa)). Gly residues predominate over residues 127–136 (GQGGSGGTRR). The segment covering 159–197 (SSDEESESVEEDEATAEEASADAEQGEAEEEEESEEDNT) has biased composition (acidic residues).

It belongs to the bacterial ribosomal protein bL17 family. In terms of assembly, part of the 50S ribosomal subunit. Contacts protein L32.

This Salinibacter ruber (strain DSM 13855 / M31) protein is Large ribosomal subunit protein bL17.